The following is a 71-amino-acid chain: Small ribosomal subunit protein bS18c (71 aa).

Belongs to the bacterial ribosomal protein bS18 family. In terms of assembly, part of the 30S ribosomal subunit.

It is found in the plastid. Its subcellular location is the chloroplast. The polypeptide is Small ribosomal subunit protein bS18c (rps18) (Mesostigma viride (Green alga)).